The primary structure comprises 1026 residues: Exportin-T (1026 aa).

Belongs to the exportin family.

It localises to the nucleus. The protein localises to the cytoplasm. In terms of biological role, tRNA nucleus export receptor which facilitates tRNA translocation across the nuclear pore complex. Involved in pre-tRNA splicing, probably by affecting the interaction of pre-tRNA with splicing endonuclease. The chain is Exportin-T (los1) from Aspergillus oryzae (strain ATCC 42149 / RIB 40) (Yellow koji mold).